The following is a 99-amino-acid chain: Protein Tat (99 aa).

Positions Met-1–Thr-20 are disordered. Residues Met-1 to Gln-24 form an interaction with human CREBBP region. The tract at residues Met-1–Gly-48 is transactivation. Residues Cys-22, Cys-25, and Cys-27 each contribute to the Zn(2+) site. The tract at residues Cys-22–Cys-37 is cysteine-rich. Residue Lys-28 is modified to N6-acetyllysine; by host PCAF. Residues Cys-30, His-33, Cys-34, and Cys-37 each coordinate Zn(2+). The core stretch occupies residues Phe-38–Gly-48. The Nuclear localization signal, RNA-binding (TAR), and protein transduction signature appears at Arg-49–Thr-57. The tract at residues Arg-49–Glu-86 is interaction with the host capping enzyme RNGTT. Lys-51 carries the post-translational modification N6-acetyllysine; by host EP300 and GCN5L2. An asymmetric dimethylarginine; by host PRMT6 mark is found at Arg-52 and Arg-53. A disordered region spans residues Gln-54–Pro-99. Lys-71 is covalently cross-linked (Glycyl lysine isopeptide (Lys-Gly) (interchain with G-Cter in ubiquitin)). The Cell attachment site motif lies at Arg-78–Asp-80. Positions Gly-83 to Pro-99 are enriched in basic and acidic residues.

The protein belongs to the lentiviruses Tat family. Interacts with host CCNT1. Associates with the P-TEFb complex composed at least of Tat, P-TEFb (CDK9 and CCNT1), TAR RNA, RNA Pol II. Recruits the HATs CREBBP, TAF1/TFIID, EP300, PCAF and GCN5L2. Interacts with host KAT5/Tip60; this interaction targets the latter to degradation. Interacts with the host deacetylase SIRT1. Interacts with host capping enzyme RNGTT; this interaction stimulates RNGTT. Binds to host KDR, and to the host integrins ITGAV/ITGB3 and ITGA5/ITGB1. Interacts with host KPNB1/importin beta-1 without previous binding to KPNA1/importin alpha-1. Interacts with EIF2AK2. Interacts with host nucleosome assembly protein NAP1L1; this interaction may be required for the transport of Tat within the nucleus, since the two proteins interact at the nuclear rim. Interacts with host C1QBP/SF2P32; this interaction involves lysine-acetylated Tat. Interacts with the host chemokine receptors CCR2, CCR3 and CXCR4. Interacts with host DPP4/CD26; this interaction may trigger an anti-proliferative effect. Interacts with host LDLR. Interacts with the host extracellular matrix metalloproteinase MMP1. Interacts with host PRMT6; this interaction mediates Tat's methylation. Interacts with, and is ubiquitinated by MDM2/Hdm2. Interacts with host PSMC3 and HTATIP2. Interacts with STAB1; this interaction may overcome SATB1-mediated repression of IL2 and IL2RA (interleukin) in T cells by binding to the same domain than HDAC1. Interacts (when acetylated) with human CDK13, thereby increasing HIV-1 mRNA splicing and promoting the production of the doubly spliced HIV-1 protein Nef. Interacts with host TBP; this interaction modulates the activity of transcriptional pre-initiation complex. Interacts with host RELA. Interacts with host PLSCR1; this interaction negatively regulates Tat transactivation activity by altering its subcellular distribution. Post-translationally, asymmetrical arginine methylation by host PRMT6 seems to diminish the transactivation capacity of Tat and affects the interaction with host CCNT1. Acetylation by EP300, CREBBP, GCN5L2/GCN5 and PCAF regulates the transactivation activity of Tat. EP300-mediated acetylation of Lys-50 promotes dissociation of Tat from the TAR RNA through the competitive binding to PCAF's bromodomain. In addition, the non-acetylated Tat's N-terminus can also interact with PCAF. PCAF-mediated acetylation of Lys-28 enhances Tat's binding to CCNT1. Lys-50 is deacetylated by SIRT1. In terms of processing, polyubiquitination by host MDM2 does not target Tat to degradation, but activates its transactivation function and fosters interaction with CCNT1 and TAR RNA. Post-translationally, phosphorylated by EIF2AK2 on serine and threonine residues adjacent to the basic region important for TAR RNA binding and function. Phosphorylation of Tat by EIF2AK2 is dependent on the prior activation of EIF2AK2 by dsRNA.

The protein localises to the host nucleus. Its subcellular location is the host nucleolus. It is found in the host cytoplasm. It localises to the secreted. Its function is as follows. Transcriptional activator that increases RNA Pol II processivity, thereby increasing the level of full-length viral transcripts. Recognizes a hairpin structure at the 5'-LTR of the nascent viral mRNAs referred to as the transactivation responsive RNA element (TAR) and recruits the cyclin T1-CDK9 complex (P-TEFb complex) that will in turn hyperphosphorylate the RNA polymerase II to allow efficient elongation. The CDK9 component of P-TEFb and other Tat-activated kinases hyperphosphorylate the C-terminus of RNA Pol II that becomes stabilized and much more processive. Other factors such as HTATSF1/Tat-SF1, SUPT5H/SPT5, and HTATIP2 are also important for Tat's function. Besides its effect on RNA Pol II processivity, Tat induces chromatin remodeling of proviral genes by recruiting the histone acetyltransferases (HATs) CREBBP, EP300 and PCAF to the chromatin. This also contributes to the increase in proviral transcription rate, especially when the provirus integrates in transcriptionally silent region of the host genome. To ensure maximal activation of the LTR, Tat mediates nuclear translocation of NF-kappa-B by interacting with host RELA. Through its interaction with host TBP, Tat may also modulate transcription initiation. Tat can reactivate a latently infected cell by penetrating in it and transactivating its LTR promoter. In the cytoplasm, Tat is thought to act as a translational activator of HIV-1 mRNAs. Extracellular circulating Tat can be endocytosed by surrounding uninfected cells via the binding to several surface receptors such as CD26, CXCR4, heparan sulfate proteoglycans (HSPG) or LDLR. Neurons are rarely infected, but they internalize Tat via their LDLR. Through its interaction with nuclear HATs, Tat is potentially able to control the acetylation-dependent cellular gene expression. Modulates the expression of many cellular genes involved in cell survival, proliferation or in coding for cytokines or cytokine receptors. Tat plays a role in T-cell and neurons apoptosis. Tat induced neurotoxicity and apoptosis probably contribute to neuroAIDS. Circulating Tat also acts as a chemokine-like and/or growth factor-like molecule that binds to specific receptors on the surface of the cells, affecting many cellular pathways. In the vascular system, Tat binds to ITGAV/ITGB3 and ITGA5/ITGB1 integrins dimers at the surface of endothelial cells and competes with bFGF for heparin-binding sites, leading to an excess of soluble bFGF. This Homo sapiens (Human) protein is Protein Tat.